We begin with the raw amino-acid sequence, 180 residues long: Large ribosomal subunit protein uL5 (180 aa).

This sequence belongs to the universal ribosomal protein uL5 family. In terms of assembly, part of the 50S ribosomal subunit; part of the 5S rRNA/L5/L18/L25 subcomplex. Contacts the 5S rRNA and the P site tRNA. Forms a bridge to the 30S subunit in the 70S ribosome.

Its function is as follows. This is one of the proteins that bind and probably mediate the attachment of the 5S RNA into the large ribosomal subunit, where it forms part of the central protuberance. In the 70S ribosome it contacts protein S13 of the 30S subunit (bridge B1b), connecting the 2 subunits; this bridge is implicated in subunit movement. Contacts the P site tRNA; the 5S rRNA and some of its associated proteins might help stabilize positioning of ribosome-bound tRNAs. The polypeptide is Large ribosomal subunit protein uL5 (Solibacter usitatus (strain Ellin6076)).